The primary structure comprises 194 residues: Protein GrpE (194 aa).

The segment covering 1-12 (MNKQKNNRERTP) has biased composition (basic and acidic residues). The tract at residues 1–44 (MNKQKNNRERTPQPEQDTERDEQLTNSHENDIDSAPAAEENDKV) is disordered.

The protein belongs to the GrpE family. Homodimer.

The protein localises to the cytoplasm. Participates actively in the response to hyperosmotic and heat shock by preventing the aggregation of stress-denatured proteins, in association with DnaK and GrpE. It is the nucleotide exchange factor for DnaK and may function as a thermosensor. Unfolded proteins bind initially to DnaJ; upon interaction with the DnaJ-bound protein, DnaK hydrolyzes its bound ATP, resulting in the formation of a stable complex. GrpE releases ADP from DnaK; ATP binding to DnaK triggers the release of the substrate protein, thus completing the reaction cycle. Several rounds of ATP-dependent interactions between DnaJ, DnaK and GrpE are required for fully efficient folding. The sequence is that of Protein GrpE from Porphyromonas gingivalis (strain ATCC BAA-308 / W83).